The sequence spans 464 residues: MAVYNYDVVVLGSGPAGEGAAMNAAKAGRKVAMVDSRRQVGGNCTHLGTIPSKALRHSVKQIIQFNTNPMFRAIGEPRWFSFPDVLKNAEMVISKQVASRTSYYARNRVDVFFGTGSFADETSINVVCTNGVVEKLVANQIIIATGSRPYRPADIDFSHKRIYDSDTILSLGHTPRKLIIYGAGVIGCEYASIFSGLGVLVELVDNRDQLLSFLDSEISQALSYHFSNNNVMVRHNEEYEKVEGLDNGVILHLKSGKKIKADALLWCNGRTGNTDKLGLENIGLKANGRGQIEVDETYRTSVSNVYGAGDVIGWPSLASAAYDQGRSAAGSMVDNGSWRYVNDVPTGIYTIPEISSIGKNEHELTQAKVPYEVGKAFFKGMARAQISGERVGMLKILFHRETLEVLGVHCFGDQASEIVHIGQAIMSQPGEANTMKYFVNTTFNYPTMAEAYRVAAYDGLNRLF.

An FAD-binding site is contributed by 35 to 44 (DSRRQVGGNC).

This sequence belongs to the class-I pyridine nucleotide-disulfide oxidoreductase family. FAD serves as cofactor.

Its subcellular location is the cytoplasm. It carries out the reaction NAD(+) + NADPH = NADH + NADP(+). Conversion of NADPH, generated by peripheral catabolic pathways, to NADH, which can enter the respiratory chain for energy generation. The polypeptide is Soluble pyridine nucleotide transhydrogenase (Pseudomonas syringae pv. syringae (strain B728a)).